A 466-amino-acid chain; its full sequence is MSARTLFDKVWDAHTVKILPSGQTQLFIGLHLVHEVTSPQAFSMLRERGLKVLFPRRTIATVDHIVPTENQARPFLDDLAEEMIRAIETNVQTNHIPFYGIGSGNQGIVHVIAPEQGLTQPGMTIACGDSHTSTHGAFGAIAFGIGTSQVRDVLATQTLSLSKLKVRRVEVNGDLNPGVYAKDVILHIIRQLGVKGGVGYAYEYAGSTIERMSMEERMTICNMAIEGGARCGYINPDQITYDYLKGRDFAPKDWESAVNWWESIKSDADAVYDDVVVFDAGEIEPTVTWGITPGQGIGVNEVIPTPESLPASERAIAEEAYQYMKLTPGAPIKGTKIDVCFVGSCTNGRISDLREAAKFAQGHRVAPHVKAFIVPGSERVKKQAEAEGLDQIFLASGFEWREAGCSMCLAMNPDKLQGDQISASSSNRNFKGRQGSASGRTLLMSPAMVVAAAIKGEVTDPRELLN.

3 residues coordinate [4Fe-4S] cluster: Cys-345, Cys-405, and Cys-408.

The protein belongs to the aconitase/IPM isomerase family. LeuC type 1 subfamily. In terms of assembly, heterodimer of LeuC and LeuD. The cofactor is [4Fe-4S] cluster.

The enzyme catalyses (2R,3S)-3-isopropylmalate = (2S)-2-isopropylmalate. The protein operates within amino-acid biosynthesis; L-leucine biosynthesis; L-leucine from 3-methyl-2-oxobutanoate: step 2/4. Catalyzes the isomerization between 2-isopropylmalate and 3-isopropylmalate, via the formation of 2-isopropylmaleate. The chain is 3-isopropylmalate dehydratase large subunit from Microcystis aeruginosa (strain NIES-843 / IAM M-2473).